Reading from the N-terminus, the 325-residue chain is Beta-ketoacyl-[acyl-carrier-protein] synthase III (325 aa).

Residues cysteine 119 and histidine 252 contribute to the active site. Positions 253–257 (QANLR) are ACP-binding. Asparagine 282 is an active-site residue.

Belongs to the thiolase-like superfamily. FabH family. In terms of assembly, homodimer.

It is found in the cytoplasm. It catalyses the reaction malonyl-[ACP] + acetyl-CoA + H(+) = 3-oxobutanoyl-[ACP] + CO2 + CoA. It participates in lipid metabolism; fatty acid biosynthesis. Its function is as follows. Catalyzes the condensation reaction of fatty acid synthesis by the addition to an acyl acceptor of two carbons from malonyl-ACP. Catalyzes the first condensation reaction which initiates fatty acid synthesis and may therefore play a role in governing the total rate of fatty acid production. Possesses both acetoacetyl-ACP synthase and acetyl transacylase activities. Its substrate specificity determines the biosynthesis of branched-chain and/or straight-chain of fatty acids. The chain is Beta-ketoacyl-[acyl-carrier-protein] synthase III from Polaromonas naphthalenivorans (strain CJ2).